The sequence spans 144 residues: Grifin (144 aa).

The Galectin domain maps to 5–133 (FEAFCAGGLA…EHRLAQVELA (129 aa)). Residue Ser138 is modified to Phosphoserine.

As to quaternary structure, homodimer.

The sequence is that of Grifin (Grifin) from Mus musculus (Mouse).